Reading from the N-terminus, the 636-residue chain is Carbon monoxide dehydrogenase 1 (636 aa).

Positions 38, 46, 47, 50, 55, and 69 each coordinate [4Fe-4S] cluster. [Ni-4Fe-5S] cluster is bound by residues His-262, Cys-297, Cys-335, Cys-448, Cys-478, and Cys-528.

Belongs to the Ni-containing carbon monoxide dehydrogenase family. As to quaternary structure, homodimer. Requires [4Fe-4S] cluster as cofactor. It depends on [Ni-4Fe-5S] cluster as a cofactor.

It is found in the cytoplasm. The protein resides in the cell membrane. The enzyme catalyses CO + 2 oxidized [2Fe-2S]-[ferredoxin] + H2O = 2 reduced [2Fe-2S]-[ferredoxin] + CO2 + 2 H(+). With respect to regulation, inactivated by O(2). CODH oxidizes carbon monoxide coupled, via CooF, to the reduction of a hydrogen cation by a hydrogenase (possibly CooH). This Carboxydothermus hydrogenoformans (strain ATCC BAA-161 / DSM 6008 / Z-2901) protein is Carbon monoxide dehydrogenase 1 (cooS1).